The sequence spans 321 residues: Peroxidase 42 (321 aa).

Residues 1–29 (MATSSGSCLIISLLVVVVAAALSASTASA) form the signal peptide. Position 30 is a pyrrolidone carboxylic acid (Gln30). 4 cysteine pairs are disulfide-bonded: Cys40-Cys118, Cys73-Cys78, Cys124-Cys315, and Cys202-Cys227. The Proton acceptor role is filled by His71. Ca(2+) is bound by residues Asp72, Ile75, Gly77, Asp79, and Ser81. Asn85 and Asn96 each carry an N-linked (GlcNAc...) asparagine glycan. A substrate-binding site is contributed by Pro165. His195 serves as a coordination point for heme b. Thr196 serves as a coordination point for Ca(2+). A glycan (N-linked (GlcNAc...) asparagine) is linked at Asn211. Ca(2+) contacts are provided by Asp239, Thr242, and Gly247. The N-linked (GlcNAc...) asparagine glycan is linked to Asn270.

This sequence belongs to the peroxidase family. Classical plant (class III) peroxidase subfamily. Heme b is required as a cofactor. Ca(2+) serves as cofactor.

Its subcellular location is the secreted. The enzyme catalyses 2 a phenolic donor + H2O2 = 2 a phenolic radical donor + 2 H2O. Removal of H(2)O(2), oxidation of toxic reductants, biosynthesis and degradation of lignin, suberization, auxin catabolism, response to environmental stresses such as wounding, pathogen attack and oxidative stress. These functions might be dependent on each isozyme/isoform in each plant tissue. The protein is Peroxidase 42 (PER42) of Zea mays (Maize).